Reading from the N-terminus, the 304-residue chain is D-alanine--D-alanine ligase (304 aa).

The 202-residue stretch at 100–301 (KLVALQSGIP…FGEFLEDLIK (202 aa)) folds into the ATP-grasp domain. Residue 129-184 (ERKLGSPFIVKPCDVGSTIGLSLVRSASEYEVALEEAFRFSDRLLLEEFIDGFEVT) participates in ATP binding. Asp-256, Glu-268, and Asn-270 together coordinate Mg(2+).

It belongs to the D-alanine--D-alanine ligase family. The cofactor is Mg(2+). It depends on Mn(2+) as a cofactor.

The protein resides in the cytoplasm. It catalyses the reaction 2 D-alanine + ATP = D-alanyl-D-alanine + ADP + phosphate + H(+). The protein operates within cell wall biogenesis; peptidoglycan biosynthesis. Functionally, cell wall formation. The chain is D-alanine--D-alanine ligase from Coprothermobacter proteolyticus (strain ATCC 35245 / DSM 5265 / OCM 4 / BT).